Reading from the N-terminus, the 88-residue chain is DNA-directed RNA polymerase subunit omega (88 aa).

It belongs to the RNA polymerase subunit omega family. In terms of assembly, the RNAP catalytic core consists of 2 alpha, 1 beta, 1 beta' and 1 omega subunit. When a sigma factor is associated with the core the holoenzyme is formed, which can initiate transcription.

It carries out the reaction RNA(n) + a ribonucleoside 5'-triphosphate = RNA(n+1) + diphosphate. Its function is as follows. Promotes RNA polymerase assembly. Latches the N- and C-terminal regions of the beta' subunit thereby facilitating its interaction with the beta and alpha subunits. This is DNA-directed RNA polymerase subunit omega from Thermobifida fusca (strain YX).